A 369-amino-acid chain; its full sequence is MKIKPQIIGLPPYKPGKPMEDVKRELGLETVVKLASNENPFGASPKVAEAIQEALHHTAIYPDGYARTLRDKVAHYVGVAPEELIFGNGSDEVIQILCRAFLNEQTNTVMAEPTFSQYKLNAVIEGAELREVPLKDGVHDLDGMLEVIDENTRIVWVCNPNNPTGTYVSAEAFQSFLAKVPEDVLVVSDEAYVEYVTADDYPDTVPMIRTYKNLVVLRTFSKVFGLAALRIGYGVANQALIEKIEPVRPPFNNSTFSQVAAVAALEDEAFVQSSVEKNNEGMEQLTEWCSRMGLDYFPSQTNFLLIHVNRSSDDVFNAMLKKGYIIRSGRALGYPAWIRITIGSKEQNDGCLAALADVLAEELTTQHLS.

Lys222 bears the N6-(pyridoxal phosphate)lysine mark.

It belongs to the class-II pyridoxal-phosphate-dependent aminotransferase family. Histidinol-phosphate aminotransferase subfamily. Homodimer. Pyridoxal 5'-phosphate serves as cofactor.

It carries out the reaction L-histidinol phosphate + 2-oxoglutarate = 3-(imidazol-4-yl)-2-oxopropyl phosphate + L-glutamate. It participates in amino-acid biosynthesis; L-histidine biosynthesis; L-histidine from 5-phospho-alpha-D-ribose 1-diphosphate: step 7/9. The polypeptide is Histidinol-phosphate aminotransferase (Halalkalibacterium halodurans (strain ATCC BAA-125 / DSM 18197 / FERM 7344 / JCM 9153 / C-125) (Bacillus halodurans)).